The following is a 669-amino-acid chain: DNA mismatch repair protein MutL (669 aa).

The segment at 343–408 is disordered; that stretch reads SAFHRAEPEE…RAPSDSSVRE (66 aa). Over residues 344–356 the composition is skewed to basic and acidic residues; sequence AFHRAEPEERESQ. Over residues 357–372 the composition is skewed to polar residues; the sequence is PETTPQYSPQSVSTTV. Over residues 390–408 the composition is skewed to basic and acidic residues; sequence TDYEIKPRDRAPSDSSVRE.

The protein belongs to the DNA mismatch repair MutL/HexB family.

In terms of biological role, this protein is involved in the repair of mismatches in DNA. It is required for dam-dependent methyl-directed DNA mismatch repair. May act as a 'molecular matchmaker', a protein that promotes the formation of a stable complex between two or more DNA-binding proteins in an ATP-dependent manner without itself being part of a final effector complex. This is DNA mismatch repair protein MutL from Vibrio parahaemolyticus serotype O3:K6 (strain RIMD 2210633).